Consider the following 700-residue polypeptide: Elongation factor G (700 aa).

Positions 8–290 (ERYRNIGISA…AVVEYLPSPV (283 aa)) constitute a tr-type G domain. Residues 17 to 24 (AHIDAGKT), 88 to 92 (DTPGH), and 142 to 145 (NKMD) contribute to the GTP site.

This sequence belongs to the TRAFAC class translation factor GTPase superfamily. Classic translation factor GTPase family. EF-G/EF-2 subfamily.

It localises to the cytoplasm. Functionally, catalyzes the GTP-dependent ribosomal translocation step during translation elongation. During this step, the ribosome changes from the pre-translocational (PRE) to the post-translocational (POST) state as the newly formed A-site-bound peptidyl-tRNA and P-site-bound deacylated tRNA move to the P and E sites, respectively. Catalyzes the coordinated movement of the two tRNA molecules, the mRNA and conformational changes in the ribosome. The sequence is that of Elongation factor G from Mannheimia succiniciproducens (strain KCTC 0769BP / MBEL55E).